The primary structure comprises 1262 residues: Zinc finger protein 592 (1262 aa).

Residues 23–45 are disordered; the sequence is SLDAKEAIQAPSEENESPLKSSG. Phosphoserine is present on residues Ser-78, Ser-142, Ser-145, and Ser-146. 3 disordered regions span residues 122 to 174, 200 to 278, and 294 to 494; these read SFTS…PPPG, KKEP…AHSK, and VANV…ASTP. Glycyl lysine isopeptide (Lys-Gly) (interchain with G-Cter in SUMO2) cross-links involve residues Lys-200 and Lys-204. 2 stretches are compositionally biased toward basic and acidic residues: residues 213–232 and 298–308; these read QQEH…DLDS and TKEDQPGHTKD. The span at 343–367 shows a compositional bias: low complexity; it reads PSDSPRSICSDSSSKGSPSVAASSP. Positions 454–463 are enriched in polar residues; that stretch reads IKTSDSSSPC. The segment covering 484 to 494 has biased composition (low complexity); it reads QQSTAPQASTP. Ser-529 bears the Phosphoserine mark. Residue Lys-546 forms a Glycyl lysine isopeptide (Lys-Gly) (interchain with G-Cter in SUMO2) linkage. Ser-573 carries the phosphoserine modification. The C2H2-type 1; atypical zinc-finger motif lies at 587-612; sequence YCCLECGDAFALEKSLSQHYSRRSVH. The C2H2-type 2; atypical zinc finger occupies 615–639; the sequence is VLCTLCSKTLLFFNKCSLLRHARDH. Position 691 is a phosphoserine (Ser-691). The C2H2-type 3; degenerate zinc finger occupies 711-731; sequence TKCPECHKQMRDYMVLATHFQ. The C2H2-type 4 zinc finger occupies 740–764; it reads LTCQVCQMLLPNQCSFCAHQRIHAH. Residues 768-790 form a C2H2-type 5; atypical zinc finger; sequence YCCPECGVLCRSAYFQTHVKENC. 3 consecutive C2H2-type zinc fingers follow at residues 799 to 822, 827 to 850, and 892 to 915; these read YRCI…QERH, HKCA…TTQH, and FKCP…KNTH. Over residues 924–935 the composition is skewed to low complexity; that stretch reads LSSLQSSTDTSS. Positions 924–979 are disordered; that stretch reads LSSLQSSTDTSSNRPGSRAPAEPPATNVAARGSSLTAGRWGRPEAHRRAEARPRMR. Basic and acidic residues predominate over residues 964–976; sequence GRPEAHRRAEARP. C2H2-type zinc fingers lie at residues 983–1006 and 1013–1036; these read WTCQ…KKSH and YPCR…RNNH. The segment at 1043–1069 adopts a C2H2-type 11; atypical zinc-finger fold; sequence YTCGYCTEDSPSFPRPSLLESHISLMH. Ser-1089 carries the post-translational modification Phosphoserine. A C2H2-type 12; atypical zinc finger spans residues 1124 to 1146; the sequence is FQCAKCTFATDSELEFQSHIPQH. The C2H2-type 13 zinc-finger motif lies at 1153–1176; that stretch reads AQCLLCGLCYTSTSSLNRHLFIVH. Phosphoserine occurs at positions 1198 and 1202. Positions 1222–1262 are disordered; that stretch reads PLVTDLGGQQGLALDEDSAQDPQNQPQASQDQNSHALSPQV. Over residues 1241–1262 the composition is skewed to polar residues; that stretch reads QDPQNQPQASQDQNSHALSPQV.

This sequence belongs to the krueppel C2H2-type zinc-finger protein family. As to quaternary structure, interacts with ZMYND8. Expressed in the brain.

The protein resides in the nucleus. May be involved in transcriptional regulation. The sequence is that of Zinc finger protein 592 (Znf592) from Mus musculus (Mouse).